Reading from the N-terminus, the 464-residue chain is Alpha-2A adrenergic receptor (464 aa).

Topologically, residues 1-47 (MFRQEQRWPRQLWPMGSLQPDSGNASWNGTEGPGGGTRATPYSLQVT) are extracellular. The tract at residues 13–34 (WPMGSLQPDSGNASWNGTEGPG) is disordered. Residues 19-29 (QPDSGNASWNG) are compositionally biased toward polar residues. N-linked (GlcNAc...) asparagine glycosylation is found at N24 and N28. The helical transmembrane segment at 48–73 (VTLVCLVGLLILLTVFGNVLVIIAVF) threads the bilayer. At 74 to 84 (TSRALKAPQNL) the chain is on the cytoplasmic side. The chain crosses the membrane as a helical span at residues 85 to 110 (FLVSLASADILVATLVIPFSLANEVM). Over 111-120 (GYWYFGKAWC) the chain is Extracellular. C120 and C201 form a disulfide bridge. A helical membrane pass occupies residues 121–143 (EIYLALDVLFCTSSIVHLCAISL). Over 144–163 (DRYWSITQAIEYNLKRTPRR) the chain is Cytoplasmic. Residues 164 to 187 (IKAIIVTVWVISAVISFPPLISFE) traverse the membrane as a helical segment. Residues 188–206 (KAGGGGQQPAEPRCEINDQ) are Extracellular-facing. A helical membrane pass occupies residues 207 to 231 (KWYVISSSIGSFFAPCLIMILVYVR). The Cytoplasmic segment spans residues 232–388 (IYQIAKRRTR…RQNREKRFTF (157 aa)). The disordered stretch occupies residues 240–378 (TRVPPSRRGP…GGAKASRWRG (139 aa)). Over residues 251–268 (AHAAAPPGGAERRPNGLG) the composition is skewed to low complexity. Over residues 312-329 (SSEHAERPPGARRPERGL) the composition is skewed to basic and acidic residues. S345 bears the Phosphoserine mark. Residues 354 to 363 (AGSGTSGSGP) show a composition bias toward gly residues. The residue at position 367 (R367) is an Omega-N-methylarginine. A helical transmembrane segment spans residues 389–413 (VLAVVIGVFVVCWFPFFFTYTLTAV). At 414-423 (GCSVPRTLFK) the chain is on the extracellular side. The helical transmembrane segment at 424–444 (FFFWFGYCNSSLNPVIYTIFN) threads the bilayer. The Cytoplasmic portion of the chain corresponds to 445-464 (HDFRRAFKKILCRGDRKRIV). A lipid anchor (S-palmitoyl cysteine) is attached at C456.

Belongs to the G-protein coupled receptor 1 family. Adrenergic receptor subfamily. ADRA2A sub-subfamily. In terms of assembly, component of the ADA2A-containing complex (ATAC), composed of KAT14, KAT2A, TADA2L, TADA3L, ZZ3, MBIP, WDR5, YEATS2, CCDC101 and DR1.

It localises to the cell membrane. Alpha-2 adrenergic receptors mediate the catecholamine-induced inhibition of adenylate cyclase through the action of G proteins. Component of the ATAC complex, a complex with histone acetyltransferase activity on histones H3 and H4. The polypeptide is Alpha-2A adrenergic receptor (Cavia porcellus (Guinea pig)).